The primary structure comprises 220 residues: Germin-like protein subfamily 2 member 4 (220 aa).

The signal sequence occupies residues 1-21 (MDSRCFGFFFTLLSLNVIVLA). The cysteines at positions 31 and 46 are disulfide-linked. 2 N-linked (GlcNAc...) asparagine glycosylation sites follow: Asn51 and Asn69. The Cupin type-1 domain occupies 58–209 (FFAGIGKPAV…TFQIGTKEIE (152 aa)). 4 residues coordinate Mn(2+): His108, His110, Glu115, and His154.

The protein belongs to the germin family. As to quaternary structure, oligomer (believed to be a pentamer but probably hexamer).

The protein resides in the secreted. It is found in the extracellular space. It localises to the apoplast. Its function is as follows. May play a role in plant defense. Probably has no oxalate oxidase activity even if the active site is conserved. This Arabidopsis thaliana (Mouse-ear cress) protein is Germin-like protein subfamily 2 member 4 (GLP10).